Here is a 640-residue protein sequence, read N- to C-terminus: Threonine--tRNA ligase (640 aa).

One can recognise a TGS domain in the interval 1-61 (MVKITYPDNS…MQDSTIKLIT (61 aa)). Residues 242-533 (DHRKLGPKLN…LIENFAGEFP (292 aa)) form a catalytic region. Zn(2+)-binding residues include C334, H385, and H510.

This sequence belongs to the class-II aminoacyl-tRNA synthetase family. In terms of assembly, homodimer. Zn(2+) is required as a cofactor.

Its subcellular location is the cytoplasm. It catalyses the reaction tRNA(Thr) + L-threonine + ATP = L-threonyl-tRNA(Thr) + AMP + diphosphate + H(+). In terms of biological role, catalyzes the attachment of threonine to tRNA(Thr) in a two-step reaction: L-threonine is first activated by ATP to form Thr-AMP and then transferred to the acceptor end of tRNA(Thr). Also edits incorrectly charged L-seryl-tRNA(Thr). This is Threonine--tRNA ligase from Petrotoga mobilis (strain DSM 10674 / SJ95).